Here is a 364-residue protein sequence, read N- to C-terminus: MPGLPTPRRLVASVNYRRTRTVEDSRMPLTEHLRELRNRVAIALLAFAIAGVVCFIFEPRIFDWLKAPYCDLPASKRFSPDGLAANDCTLYFFGILDAFTIRLKISMIAAVVVSSPVWLYQLWSFITPGLHRHERRWSLTFVGVSLVLFATGAVFAYLTLSTGLGLLLGFGGNGLVSVLDGNRYLSYVQAMLLIFGLSFEVPLLVMMLNLAGIVSTAKLRSWRRPEIFLVFVFAAVVTPSQDPFTMLALGLPMVLLYEVALIIGWLNDRRVARRGDTSPYADLDDDETSPLDFDDAPPRPAASAGPAATATSPGTANPPGTANPPGTANPVGTANPVGTGSSTPVGAGTAPVSPSTDVTHGDIT.

The next 7 helical transmembrane spans lie at 42–62 (IALL…PRIF), 107–127 (MIAA…SFIT), 139–159 (LTFV…AYLT), 160–180 (LSTG…SVLD), 194–214 (IFGL…AGIV), 225–245 (PEIF…DPFT), and 246–266 (MLAL…IGWL). Residues 277–364 (TSPYADLDDD…STDVTHGDIT (88 aa)) form a disordered region. The span at 282 to 295 (DLDDDETSPLDFDD) shows a compositional bias: acidic residues. The segment covering 301–320 (AASAGPAATATSPGTANPPG) has biased composition (low complexity). Residues 324 to 344 (PPGTANPVGTANPVGTGSSTP) show a composition bias toward polar residues.

Belongs to the TatC family. The Tat system comprises two distinct complexes: a TatABC complex, containing multiple copies of TatA, TatB and TatC subunits, and a separate TatA complex, containing only TatA subunits. Substrates initially bind to the TatABC complex, which probably triggers association of the separate TatA complex to form the active translocon.

The protein resides in the cell membrane. Functionally, part of the twin-arginine translocation (Tat) system that transports large folded proteins containing a characteristic twin-arginine motif in their signal peptide across membranes. Together with TatB, TatC is part of a receptor directly interacting with Tat signal peptides. This is Sec-independent protein translocase protein TatC from Frankia casuarinae (strain DSM 45818 / CECT 9043 / HFP020203 / CcI3).